We begin with the raw amino-acid sequence, 265 residues long: Neuronal membrane glycoprotein M6-b (265 aa).

The chain crosses the membrane as a helical span at residues 31 to 51 (GGVPYASLVATILCFSGVALF). Residue asparagine 73 is glycosylated (N-linked (GlcNAc...) asparagine). 2 consecutive transmembrane segments (helical) span residues 90–110 (VIYG…AEGF) and 136–156 (FVFL…FSAV). Residue asparagine 177 is glycosylated (N-linked (GlcNAc...) asparagine). The helical transmembrane segment at 224 to 244 (LFIVACAGAGATVIALLIYMM) threads the bilayer. Phosphoserine is present on serine 257.

Belongs to the myelin proteolipid protein family. In terms of assembly, interacts with SERT.

Its subcellular location is the membrane. It localises to the cell membrane. In terms of biological role, may be involved in neural development. Involved in regulation of osteoblast function and bone formation. Involved in matrix vesicle release by osteoblasts; this function seems to involve maintenance of the actin cytoskeleton. May be involved in cellular trafficking of SERT and thereby in regulation of serotonin uptake. The protein is Neuronal membrane glycoprotein M6-b (GPM6B) of Pongo abelii (Sumatran orangutan).